The following is a 164-amino-acid chain: Probable Brix domain-containing ribosomal biogenesis protein (164 aa).

Residues 1-164 (MIITTSRKPS…IKTVKILDIE (164 aa)) form the Brix domain.

Functionally, probably involved in the biogenesis of the ribosome. The sequence is that of Probable Brix domain-containing ribosomal biogenesis protein from Methanococcus maripaludis (strain DSM 14266 / JCM 13030 / NBRC 101832 / S2 / LL).